The following is a 437-amino-acid chain: Eukaryotic peptide chain release factor subunit 1 (437 aa).

Q182 is subject to N5-methylglutamine. A Glycyl lysine isopeptide (Lys-Gly) (interchain with G-Cter in ubiquitin) cross-link involves residue K331. A Phosphoserine modification is found at S421.

This sequence belongs to the eukaryotic release factor 1 family. As to quaternary structure, component of the eRF1-eRF3-GTP ternary complex, composed of SUP45/eRF1, SUP35/eRF3 and GTP. Interacts with TPA1. Post-translationally, N5-methylated on Gln-182 by MTQ2.

The protein resides in the cytoplasm. Functionally, component of the eRF1-eRF3-GTP ternary complex, a ternary complex that mediates translation termination in response to the termination codons. The eRF1-eRF3-GTP complex binds to a stop codon in the ribosomal A-site. SUP45/eRF1 is responsible for stop codon recognition and inducing hydrolysis of peptidyl-tRNA. Following GTP hydrolysis by SUP35/eRF3, SUP35/eRF3 dissociates, permitting SUP45/eRF1 to accommodate fully in the A-site and mediate hydrolysis of peptidyl-tRNA. The chain is Eukaryotic peptide chain release factor subunit 1 (SUP45) from Saccharomyces cerevisiae (strain ATCC 204508 / S288c) (Baker's yeast).